Consider the following 379-residue polypeptide: Probable protein phosphatase 2C 46 (379 aa).

An N-terminal signal peptide occupies residues 1-20 (MLSTLMKLLSACLWPSSSSG). Residues 42–353 (LVGEFSMAVV…DDITVVIIFL (312 aa)) enclose the PPM-type phosphatase domain. Position 73 is a phosphoserine (S73). Residues D84, G85, D285, and D344 each contribute to the Mn(2+) site.

The protein belongs to the PP2C family. In terms of assembly, interacts with SAUR19. The cofactor is Mg(2+). Mn(2+) serves as cofactor.

The catalysed reaction is O-phospho-L-seryl-[protein] + H2O = L-seryl-[protein] + phosphate. It carries out the reaction O-phospho-L-threonyl-[protein] + H2O = L-threonyl-[protein] + phosphate. May dephosphorylate and repress plasma membrane H(+)-ATPases (PM H(+)-ATPases, e.g. AHA1 and AHA2), thus influencing negatively plant growth and fitness. This Arabidopsis thaliana (Mouse-ear cress) protein is Probable protein phosphatase 2C 46.